The chain runs to 573 residues: Urease subunit alpha (573 aa).

Ni(2+)-binding residues include His-139, His-141, and Lys-222. N6-carboxylysine is present on Lys-222. His-224 provides a ligand contact to substrate. 2 residues coordinate Ni(2+): His-251 and His-277. His-325 (proton donor) is an active-site residue. Residue Asp-365 coordinates Ni(2+).

The protein belongs to the metallo-dependent hydrolases superfamily. Urease alpha subunit family. Heterotrimer of UreA (gamma), UreB (beta) and UreC (alpha) subunits. Three heterotrimers associate to form the active enzyme. It depends on Ni cation as a cofactor. Post-translationally, carboxylation allows a single lysine to coordinate two nickel ions.

It localises to the cytoplasm. The catalysed reaction is urea + 2 H2O + H(+) = hydrogencarbonate + 2 NH4(+). The protein operates within nitrogen metabolism; urea degradation; CO(2) and NH(3) from urea (urease route): step 1/1. The chain is Urease subunit alpha from Flavobacterium johnsoniae (strain ATCC 17061 / DSM 2064 / JCM 8514 / BCRC 14874 / CCUG 350202 / NBRC 14942 / NCIMB 11054 / UW101) (Cytophaga johnsonae).